An 81-amino-acid polypeptide reads, in one-letter code: ATP synthase subunit c, chloroplastic (81 aa).

Helical transmembrane passes span 3 to 23 (PLIS…ASIG) and 57 to 77 (LAFM…LLFA).

It belongs to the ATPase C chain family. As to quaternary structure, F-type ATPases have 2 components, F(1) - the catalytic core - and F(0) - the membrane proton channel. F(1) has five subunits: alpha(3), beta(3), gamma(1), delta(1), epsilon(1). F(0) has four main subunits: a(1), b(1), b'(1) and c(10-14). The alpha and beta chains form an alternating ring which encloses part of the gamma chain. F(1) is attached to F(0) by a central stalk formed by the gamma and epsilon chains, while a peripheral stalk is formed by the delta, b and b' chains.

Its subcellular location is the plastid. The protein resides in the chloroplast thylakoid membrane. In terms of biological role, f(1)F(0) ATP synthase produces ATP from ADP in the presence of a proton or sodium gradient. F-type ATPases consist of two structural domains, F(1) containing the extramembraneous catalytic core and F(0) containing the membrane proton channel, linked together by a central stalk and a peripheral stalk. During catalysis, ATP synthesis in the catalytic domain of F(1) is coupled via a rotary mechanism of the central stalk subunits to proton translocation. Key component of the F(0) channel; it plays a direct role in translocation across the membrane. A homomeric c-ring of between 10-14 subunits forms the central stalk rotor element with the F(1) delta and epsilon subunits. In Ceratophyllum demersum (Rigid hornwort), this protein is ATP synthase subunit c, chloroplastic.